A 124-amino-acid chain; its full sequence is UPF0235 protein (124 aa).

The interval 1–22 (MTKKGSSNSSKQQQQQQQIIIN) is disordered.

This sequence belongs to the UPF0235 family.

The polypeptide is UPF0235 protein (Dictyostelium discoideum (Social amoeba)).